We begin with the raw amino-acid sequence, 142 residues long: Hemoglobin subunit alpha-2 (142 aa).

The Globin domain occupies 2-142 (VLSPADKTNV…VSTVLTSKYR (141 aa)). His-59 lines the O2 pocket. His-88 lines the heme b pocket.

This sequence belongs to the globin family. As to quaternary structure, heterotetramer of two alpha chains and two beta chains. As to expression, red blood cells.

In terms of biological role, involved in oxygen transport from the lung to the various peripheral tissues. This Arctocephalus galapagoensis (Galapagoes fur seal) protein is Hemoglobin subunit alpha-2.